Consider the following 424-residue polypeptide: 3-ketoacyl-CoA thiolase, peroxisomal (424 aa).

Residues methionine 1–cysteine 26 constitute a peroxisome transit peptide. The tract at residues methionine 1–cysteine 26 is PTS2-type peroxisomal targeting signal. Phosphothreonine is present on residues threonine 59 and threonine 60. The active-site Acyl-thioester intermediate is the cysteine 123. Catalysis depends on proton acceptor residues histidine 377 and cysteine 408.

It belongs to the thiolase-like superfamily. Thiolase family. As to quaternary structure, homodimer. Interacts (via PTS2-type peroxisomal targeting signal region) with PEX7; leading to its translocation into peroxisomes.

The protein localises to the peroxisome. It catalyses the reaction an acyl-CoA + acetyl-CoA = a 3-oxoacyl-CoA + CoA. The enzyme catalyses 2 acetyl-CoA = acetoacetyl-CoA + CoA. The catalysed reaction is tetradecanoyl-CoA + acetyl-CoA = 3-oxohexadecanoyl-CoA + CoA. It carries out the reaction hexanoyl-CoA + acetyl-CoA = 3-oxooctanoyl-CoA + CoA. It catalyses the reaction 3-oxohexadecanedioyl-CoA + CoA = tetradecanedioyl-CoA + acetyl-CoA. The enzyme catalyses 3-oxo-(6Z,9Z,12Z,15Z,18Z,21Z)-tetracosahexaenoyl-CoA + CoA = (4Z,7Z,10Z,13Z,16Z,19Z)-docosahexaenoyl-CoA + acetyl-CoA. Its pathway is lipid metabolism; peroxisomal fatty acid beta-oxidation. Its function is as follows. Responsible for the thiolytic cleavage of straight chain 3-keto fatty acyl-CoAs (3-oxoacyl-CoAs). Plays an important role in fatty acid peroxisomal beta-oxidation. Catalyzes the cleavage of short, medium, long, and very long straight chain 3-oxoacyl-CoAs. The chain is 3-ketoacyl-CoA thiolase, peroxisomal from Homo sapiens (Human).